The primary structure comprises 246 residues: MATGGAAADLEDVQTVDLMSELLRRLKCSQKPDKRLIFIGPPGSGKGTQSPVVKDEYCLCHLSTGDMLRAAVASKTPLGVKAKEAMEKGELVSDDLVVGIIDEAMNKPKCQKGFILDGFPRTVTQAEKLDEMLKRRGTEIDKVLNFAIDDAILEERITGRWIHPSSGRSYHTKFAPPKTPGVDDITGEPLIQRKDDNADVLKSRLAAFHSQTQPVIDYYAKKAVLTNIQAEKAPQEVTSEVKKALS.

Alanine 2 carries the N-acetylalanine modification. Residue glycine 43 to threonine 48 participates in ATP binding. Residues serine 63–valine 92 form an NMP region. Residues threonine 64, arginine 69, glutamate 90–valine 92, glycine 118–arginine 121, and glutamine 125 contribute to the AMP site. The LID stretch occupies residues glycine 159–aspartate 196. Residue arginine 160 coordinates ATP. Residues arginine 193 and arginine 204 each contribute to the AMP site.

This sequence belongs to the adenylate kinase family. As to quaternary structure, monomer.

The protein localises to the cytoplasm. The catalysed reaction is AMP + ATP = 2 ADP. In terms of biological role, catalyzes the reversible transfer of the terminal phosphate group between ATP and AMP. Plays an important role in cellular energy homeostasis and in adenine nucleotide metabolism. The chain is Adenylate kinase 4 (ADK1) from Arabidopsis thaliana (Mouse-ear cress).